Consider the following 96-residue polypeptide: Co-chaperonin GroES (96 aa).

It belongs to the GroES chaperonin family. In terms of assembly, heptamer of 7 subunits arranged in a ring. Interacts with the chaperonin GroEL.

Its subcellular location is the cytoplasm. In terms of biological role, together with the chaperonin GroEL, plays an essential role in assisting protein folding. The GroEL-GroES system forms a nano-cage that allows encapsulation of the non-native substrate proteins and provides a physical environment optimized to promote and accelerate protein folding. GroES binds to the apical surface of the GroEL ring, thereby capping the opening of the GroEL channel. The chain is Co-chaperonin GroES from Syntrophomonas wolfei subsp. wolfei (strain DSM 2245B / Goettingen).